An 81-amino-acid polypeptide reads, in one-letter code: Small cysteine-rich protein 1 1 (81 aa).

Positions 1–19 (MGVHFNICLLLLLVATISS) are cleaved as a signal peptide. Residues 20 to 39 (QTLKATEKDDSTDENPFGIY) constitute a propeptide that is removed on maturation.

It belongs to the Cnidaria small cysteine-rich protein (SCRiP) family. alpha subfamily. In terms of processing, the basic myotoxic domain of rattlesnake crotamine toxins (with 6 Cys residues) has been detected in this protein. However, this protein contains 2 additional Cys at the C-terminal region. Hence, this protein may contain 4 disulfide bonds instead of the 3 suggested by the myotoxin domain.

It is found in the secreted. It localises to the nematocyst. Functionally, induces neurotoxic symptoms on zebrafish. Has also been claimed to be implied in calcification, but tests on homolog proteins suggest that proteins of this family have a neurotoxic function and not a calcification function. The chain is Small cysteine-rich protein 1 1 from Montipora capitata (Rice coral).